The following is a 123-amino-acid chain: Alpha-lactalbumin A (123 aa).

The C-type lysozyme domain occupies 1-123; that stretch reads KQFTKCELSQ…KLEQWLCEEL (123 aa). 4 disulfides stabilise this stretch: Cys-6/Cys-120, Cys-28/Cys-111, Cys-61/Cys-77, and Cys-73/Cys-91. Residues Lys-79, Asp-82, Asp-84, Asp-87, and Asp-88 each contribute to the Ca(2+) site.

Belongs to the glycosyl hydrolase 22 family. As to quaternary structure, lactose synthase (LS) is a heterodimer of a catalytic component, beta1,4-galactosyltransferase (beta4Gal-T1) and a regulatory component, alpha-lactalbumin (LA). Mammary gland specific. Secreted in milk.

The protein localises to the secreted. In terms of biological role, regulatory subunit of lactose synthase, changes the substrate specificity of galactosyltransferase in the mammary gland making glucose a good acceptor substrate for this enzyme. This enables LS to synthesize lactose, the major carbohydrate component of milk. In other tissues, galactosyltransferase transfers galactose onto the N-acetylglucosamine of the oligosaccharide chains in glycoproteins. This is Alpha-lactalbumin A from Equus caballus (Horse).